A 279-amino-acid chain; its full sequence is HTH-type transcriptional regulator HdfR (279 aa).

Residues 1–58 enclose the HTH lysR-type domain; sequence MDTELLKTFLEVSRTRHFGRAAESLYLTQSAVSFRIRQLENQLGVNLFTRHRNNIRLT. The segment at residues 18 to 37 is a DNA-binding region (H-T-H motif); that stretch reads FGRAAESLYLTQSAVSFRIR.

It belongs to the LysR transcriptional regulatory family.

Negatively regulates the transcription of the flagellar master operon flhDC by binding to the upstream region of the operon. The sequence is that of HTH-type transcriptional regulator HdfR from Escherichia coli O17:K52:H18 (strain UMN026 / ExPEC).